A 716-amino-acid polypeptide reads, in one-letter code: 1,4-alpha-glucan branching enzyme GlgB (716 aa).

The Nucleophile role is filled by D399. E452 functions as the Proton donor in the catalytic mechanism.

The protein belongs to the glycosyl hydrolase 13 family. GlgB subfamily. In terms of assembly, monomer.

The enzyme catalyses Transfers a segment of a (1-&gt;4)-alpha-D-glucan chain to a primary hydroxy group in a similar glucan chain.. It functions in the pathway glycan biosynthesis; glycogen biosynthesis. In terms of biological role, catalyzes the formation of the alpha-1,6-glucosidic linkages in glycogen by scission of a 1,4-alpha-linked oligosaccharide from growing alpha-1,4-glucan chains and the subsequent attachment of the oligosaccharide to the alpha-1,6 position. This Rhodopseudomonas palustris (strain ATCC BAA-98 / CGA009) protein is 1,4-alpha-glucan branching enzyme GlgB.